We begin with the raw amino-acid sequence, 61 residues long: Protein translocase subunit SecE (61 aa).

The helical transmembrane segment at 39–59 threads the bilayer; it reads VGIIIIGLIGFILSIVSQVLF.

Belongs to the SecE/SEC61-gamma family. Component of the Sec protein translocase complex. Heterotrimer consisting of SecY (alpha), SecG (beta) and SecE (gamma) subunits. The heterotrimers can form oligomers, although 1 heterotrimer is thought to be able to translocate proteins. Interacts with the ribosome. May interact with SecDF, and other proteins may be involved.

The protein resides in the cell membrane. Its function is as follows. Essential subunit of the Sec protein translocation channel SecYEG. Clamps together the 2 halves of SecY. May contact the channel plug during translocation. This Methanosphaera stadtmanae (strain ATCC 43021 / DSM 3091 / JCM 11832 / MCB-3) protein is Protein translocase subunit SecE.